Here is a 186-residue protein sequence, read N- to C-terminus: MIVAGDFKNGVTFELDNNIFQVVEFQHVKPGKGAAFVRTKLKNIITGATVERTFNPTDKMPKAHIERKDMQYLYNDGDLYYFMDVESYEQLPINKETIGNTLDLVKENDIVKILSHKGNVFGIEPPTFVELEVTETDPGFKGDTATGATKPATVETGYVIKVPLFVNTGDIIRIDTRTNEYMERVK.

It belongs to the elongation factor P family.

The protein localises to the cytoplasm. It functions in the pathway protein biosynthesis; polypeptide chain elongation. In terms of biological role, involved in peptide bond synthesis. Stimulates efficient translation and peptide-bond synthesis on native or reconstituted 70S ribosomes in vitro. Probably functions indirectly by altering the affinity of the ribosome for aminoacyl-tRNA, thus increasing their reactivity as acceptors for peptidyl transferase. The protein is Elongation factor P of Ruminiclostridium cellulolyticum (strain ATCC 35319 / DSM 5812 / JCM 6584 / H10) (Clostridium cellulolyticum).